Here is a 49-residue protein sequence, read N- to C-terminus: Large ribosomal subunit protein bL33B (49 aa).

Belongs to the bacterial ribosomal protein bL33 family.

The chain is Large ribosomal subunit protein bL33B from Lactobacillus delbrueckii subsp. bulgaricus (strain ATCC BAA-365 / Lb-18).